The sequence spans 315 residues: 4-carboxy-2-hydroxymuconate-6-semialdehyde dehydrogenase (315 aa).

It belongs to the Gfo/Idh/MocA family. As to quaternary structure, homodimer.

The catalysed reaction is 4-carboxy-2-hydroxymuconate semialdehyde hemiacetal + NADP(+) = 2-oxo-2H-pyran-4,6-dicarboxylate + NADPH + H(+). It functions in the pathway secondary metabolite metabolism; lignin degradation. Inhibited by p-chloromercuribenzoate (10 mM), HgCl2 (10 mM), or 5,5-dithiobis(2-nitrobenzoate) (100 mM). In terms of biological role, involved in the degradation of protocatechuate (PCA) via the PCA 4,5-cleavage pathway. Catalyzes the oxidation of the hemiacetal form of 4-carboxy-2-hydroxymuconate-6-semialdehyde (CHMS) to produce 2-pyrone-4,6-dicarboxylate (PDC). LigC has 10-times-higher affinity to NADP than to NAD. The polypeptide is 4-carboxy-2-hydroxymuconate-6-semialdehyde dehydrogenase (ligC) (Sphingobium sp. (strain NBRC 103272 / SYK-6)).